The chain runs to 337 residues: Anthranilate phosphoribosyltransferase (337 aa).

5-phospho-alpha-D-ribose 1-diphosphate is bound by residues Gly79, 82–83 (GD), Thr87, 89–92 (NVST), 107–115 (KHGNRSVSS), and Ser119. Position 79 (Gly79) interacts with anthranilate. Ser91 is a binding site for Mg(2+). An anthranilate-binding site is contributed by Asn110. Anthranilate is bound at residue Arg165. Mg(2+)-binding residues include Asp223 and Glu224.

This sequence belongs to the anthranilate phosphoribosyltransferase family. As to quaternary structure, homodimer. Mg(2+) serves as cofactor.

It carries out the reaction N-(5-phospho-beta-D-ribosyl)anthranilate + diphosphate = 5-phospho-alpha-D-ribose 1-diphosphate + anthranilate. Its pathway is amino-acid biosynthesis; L-tryptophan biosynthesis; L-tryptophan from chorismate: step 2/5. Catalyzes the transfer of the phosphoribosyl group of 5-phosphorylribose-1-pyrophosphate (PRPP) to anthranilate to yield N-(5'-phosphoribosyl)-anthranilate (PRA). The protein is Anthranilate phosphoribosyltransferase of Aeromonas salmonicida (strain A449).